The following is a 268-amino-acid chain: MERYQQLFKQLAAKKEGAFVPFVQLGDPSPAMSLNIIDTLIAAGADALELGIPFSDPLADGPTIQNAALRAFAAGVTPGICFEILAEIRQKHPTIPIGLLMYANLVFHNGIDHFYQRCAEVGVDSVLIADVPFEESAPFRAAALRHGIAPIFICPPNADDDLLREIASHGRGYTYLLSRAGVTGAENHGQLPLNHLVDKLREYNAAPALQGFGISEPAQVKASLAAGAAGAISGSAIVKIIEKNVAQPVEMLVQLTRFVTEMKAATRS.

Active-site proton acceptor residues include E49 and D60.

It belongs to the TrpA family. Tetramer of two alpha and two beta chains.

It carries out the reaction (1S,2R)-1-C-(indol-3-yl)glycerol 3-phosphate + L-serine = D-glyceraldehyde 3-phosphate + L-tryptophan + H2O. It participates in amino-acid biosynthesis; L-tryptophan biosynthesis; L-tryptophan from chorismate: step 5/5. Its function is as follows. The alpha subunit is responsible for the aldol cleavage of indoleglycerol phosphate to indole and glyceraldehyde 3-phosphate. In Yersinia pestis bv. Antiqua (strain Antiqua), this protein is Tryptophan synthase alpha chain.